Consider the following 94-residue polypeptide: CRISPR-associated endoribonuclease Cas2 1 (94 aa).

Asp8 provides a ligand contact to Mg(2+).

This sequence belongs to the CRISPR-associated endoribonuclease Cas2 protein family. Homodimer, forms a heterotetramer with a Cas1 homodimer. Mg(2+) serves as cofactor.

Its function is as follows. CRISPR (clustered regularly interspaced short palindromic repeat), is an adaptive immune system that provides protection against mobile genetic elements (viruses, transposable elements and conjugative plasmids). CRISPR clusters contain sequences complementary to antecedent mobile elements and target invading nucleic acids. CRISPR clusters are transcribed and processed into CRISPR RNA (crRNA). Functions as a ssRNA-specific endoribonuclease. Involved in the integration of spacer DNA into the CRISPR cassette. The polypeptide is CRISPR-associated endoribonuclease Cas2 1 (Synechocystis sp. (strain ATCC 27184 / PCC 6803 / Kazusa)).